The sequence spans 529 residues: ATP synthase F(1) complex catalytic subunit beta, mitochondrial (529 aa).

The N-terminal 46 residues, 1 to 46, are a transit peptide targeting the mitochondrion; that stretch reads MLSLVGRVASASASGALRGLSPSAALPQAQLLLRAAPAGVHPARDY. O-linked (GlcNAc) serine glycosylation is present at Ser-106. N6-acetyllysine; alternate is present on residues Lys-124, Lys-133, and Lys-161. An N6-succinyllysine; alternate mark is found at Lys-124, Lys-133, and Lys-161. Position 198 is an N6-acetyllysine (Lys-198). Residues Gly-209, Val-210, Gly-211, Lys-212, Thr-213, and Val-214 each coordinate ADP. Gly-209 provides a ligand contact to ATP. The phosphate site is built by Gly-209, Val-210, Gly-211, Lys-212, and Thr-213. ATP is bound by residues Gly-211, Lys-212, Thr-213, and Val-214. Thr-213 contributes to the Mg(2+) binding site. Position 238 (Glu-238) interacts with Mg(2+). Arg-239 serves as a coordination point for ATP. Residues Lys-259 and Lys-264 each carry the N6-acetyllysine; alternate modification. 2 positions are modified to N6-succinyllysine; alternate: Lys-259 and Lys-264. Position 312 is a phosphothreonine (Thr-312). Lys-426 is modified (N6-acetyllysine). At Ser-433 the chain carries Phosphoserine. N6-acetyllysine is present on residues Lys-480 and Lys-485. Lys-522 is subject to N6-acetyllysine; alternate. An N6-succinyllysine; alternate modification is found at Lys-522. The residue at position 529 (Ser-529) is a Phosphoserine.

This sequence belongs to the ATPase alpha/beta chains family. Homotrimer. Component of the ATP synthase complex composed at least of ATP5F1A/subunit alpha, ATP5F1B/subunit beta, ATP5MC1/subunit c (homooctomer), MT-ATP6/subunit a, MT-ATP8/subunit 8, ATP5ME/subunit e, ATP5MF/subunit f, ATP5MG/subunit g, ATP5MK/subunit k, ATP5MJ/subunit j, ATP5F1C/subunit gamma, ATP5F1D/subunit delta, ATP5F1E/subunit epsilon, ATP5PF/subunit F6, ATP5PB/subunit b, ATP5PD/subunit d, ATP5PO/subunit OSCP. ATP synthase complex consists of a soluble F(1) head domain (subunits alpha(3) and beta(3)) - the catalytic core - and a membrane F(0) domain - the membrane proton channel (subunits c, a, 8, e, f, g, k and j). These two domains are linked by a central stalk (subunits gamma, delta, and epsilon) rotating inside the F1 region and a stationary peripheral stalk (subunits F6, b, d, and OSCP). Interacts with PPIF. Interacts with BCL2L1 isoform BCL-X(L); the interaction mediates the association of BCL2L1 isoform BCL-X(L) with the mitochondrial membrane F(1)F(0) ATP synthase and enhances neurons metabolic efficiency. Interacts with CLN5 and PPT1. Interacts with S100A1; this interaction increases F1-ATPase activity. Interacts with MTLN. Interacts with TTC5/STRAP; the interaction results in decreased mitochondrial ATP production. Post-translationally, acetylation of Lys-133 is observed in liver mitochondria from fasted mice but not from fed mice.

It localises to the mitochondrion inner membrane. It carries out the reaction ATP + H2O + 4 H(+)(in) = ADP + phosphate + 5 H(+)(out). Catalytic subunit beta, of the mitochondrial membrane ATP synthase complex (F(1)F(0) ATP synthase or Complex V) that produces ATP from ADP in the presence of a proton gradient across the membrane which is generated by electron transport complexes of the respiratory chain. ATP synthase complex consist of a soluble F(1) head domain - the catalytic core - and a membrane F(1) domain - the membrane proton channel. These two domains are linked by a central stalk rotating inside the F(1) region and a stationary peripheral stalk. During catalysis, ATP synthesis in the catalytic domain of F(1) is coupled via a rotary mechanism of the central stalk subunits to proton translocation. In vivo, can only synthesize ATP although its ATP hydrolase activity can be activated artificially in vitro. With the subunit alpha (ATP5F1A), forms the catalytic core in the F(1) domain. This is ATP synthase F(1) complex catalytic subunit beta, mitochondrial from Mus musculus (Mouse).